A 311-amino-acid polypeptide reads, in one-letter code: tRNA-cytidine(32) 2-sulfurtransferase (311 aa).

The short motif at Ser47 to Ser52 is the PP-loop motif element. Residues Cys122, Cys125, and Cys213 each coordinate [4Fe-4S] cluster.

It belongs to the TtcA family. As to quaternary structure, homodimer. The cofactor is Mg(2+). [4Fe-4S] cluster serves as cofactor.

The protein localises to the cytoplasm. The enzyme catalyses cytidine(32) in tRNA + S-sulfanyl-L-cysteinyl-[cysteine desulfurase] + AH2 + ATP = 2-thiocytidine(32) in tRNA + L-cysteinyl-[cysteine desulfurase] + A + AMP + diphosphate + H(+). It participates in tRNA modification. Catalyzes the ATP-dependent 2-thiolation of cytidine in position 32 of tRNA, to form 2-thiocytidine (s(2)C32). The sulfur atoms are provided by the cysteine/cysteine desulfurase (IscS) system. The sequence is that of tRNA-cytidine(32) 2-sulfurtransferase from Klebsiella pneumoniae subsp. pneumoniae (strain ATCC 700721 / MGH 78578).